The primary structure comprises 554 residues: Solute carrier family 22 member 1 (554 aa).

The Cytoplasmic segment spans residues 1–24 (MPSVDDVLEQVGEFGWFQKQAFLN). Residues 25–45 (LCLTSVAFAPIYVGIVFLGFT) traverse the membrane as a helical segment. Topologically, residues 46 to 234 (PDHRCRSPGV…EFVGLGYRKT (189 aa)) are extracellular. An N-linked (GlcNAc...) asparagine glycan is attached at N71. The helical transmembrane segment at 235-255 (VAILYQTAFSVGLVLLSGLAY) threads the bilayer. Residues 256 to 261 (AVPHWR) lie on the Cytoplasmic side of the membrane. A helical membrane pass occupies residues 262-282 (SLQLAVSLPIFLLLLCYWFVP). A Proline-rich sequence motif is present at residues 282 to 286 (PESPR). Topologically, residues 283-347 (ESPRWLLSQK…FRTQNLRKYT (65 aa)) are extracellular. S333 bears the Phosphoserine mark. The helical transmembrane segment at 348–368 (FILMYLWFTSSVLYQGLIMHV) threads the bilayer. At 369 to 376 (GATGGSLY) the chain is on the cytoplasmic side. Residues 377-397 (LDFLYSALVEFPAAFVILLII) form a helical membrane-spanning segment. Residues 398–402 (DRFGR) are Extracellular-facing. A helical transmembrane segment spans residues 403 to 423 (LYLLAGSNLLAGAACFFMIFI). Topologically, residues 424–431 (SHDLHWLS) are cytoplasmic. The chain crosses the membrane as a helical span at residues 432–452 (IVAACIGRMGITIVFQMVCLV). Over 453 to 464 (SAELYPTFIRNL) the chain is Extracellular. Residues 465–485 (GVMVCSSLCDLGGVVAPFLVF) form a helical membrane-spanning segment. The Cytoplasmic portion of the chain corresponds to 486–492 (RLTEVWR). Residues 493 to 513 (GLPLVLFAALGLVAGGMSLLL) traverse the membrane as a helical segment. At 514–554 (PETKGVALPETIEEVERLGRKAKPRDNMIYLQVKMPEPAGL) the chain is on the extracellular side.

The protein belongs to the major facilitator (TC 2.A.1) superfamily. Organic cation transporter (TC 2.A.1.19) family. In terms of processing, phosphorylated.

The protein resides in the basolateral cell membrane. It is found in the apical cell membrane. Its subcellular location is the lateral cell membrane. It localises to the basal cell membrane. The protein localises to the cell membrane. It catalyses the reaction 1-methylnicotinamide(out) = 1-methylnicotinamide(in). The catalysed reaction is dopamine(out) = dopamine(in). It carries out the reaction serotonin(out) = serotonin(in). The enzyme catalyses (R)-adrenaline(out) = (R)-adrenaline(in). It catalyses the reaction (R)-noradrenaline(out) = (R)-noradrenaline(in). The catalysed reaction is histamine(out) = histamine(in). It carries out the reaction guanidine(out) = guanidine(in). The enzyme catalyses choline(out) = choline(in). It catalyses the reaction acetylcholine(in) = acetylcholine(out). The catalysed reaction is thiamine(in) = thiamine(out). It carries out the reaction spermidine(in) = spermidine(out). The enzyme catalyses agmatine(out) = agmatine(in). It catalyses the reaction putrescine(out) = putrescine(in). The catalysed reaction is (R)-carnitine(in) = (R)-carnitine(out). It carries out the reaction O-isobutanoyl-(R)-carnitine(in) = O-isobutanoyl-(R)-carnitine(out). The enzyme catalyses O-acetyl-(R)-carnitine(in) = O-acetyl-(R)-carnitine(out). It catalyses the reaction O-3-hydroxybutanoyl-(R)-carnitine(in) = O-3-hydroxybutanoyl-(R)-carnitine(out). The catalysed reaction is O-propanoyl-(R)-carnitine(in) = O-propanoyl-(R)-carnitine(out). It carries out the reaction O-butanoyl-(R)-carnitine(in) = O-butanoyl-(R)-carnitine(out). The enzyme catalyses O-2-methylbutanoyl-(R)-carnitine(in) = O-2-methylbutanoyl-(R)-carnitine(out). It catalyses the reaction O-3-methylbutanoyl-(R)-carnitine(in) = O-3-methylbutanoyl-(R)-carnitine(out). The catalysed reaction is O-hexanoyl-(R)-carnitine(in) = O-hexanoyl-(R)-carnitine(out). It carries out the reaction L-histidyl-L-proline diketopiperazine(in) = L-histidyl-L-proline diketopiperazine(out). The enzyme catalyses (R)-salsolinol(in) = (R)-salsolinol(out). It catalyses the reaction prostaglandin F2alpha(out) = prostaglandin F2alpha(in). The catalysed reaction is prostaglandin E2(out) = prostaglandin E2(in). Phosphorylation of the transporter leads to changes in its substrate affinity, resulting in a regulation of the transport activity. In contrast with rat ortholog, ASP uptake is inhibited by protein kinase A (PKA) and C (PKC) activation. ASP uptake is also endogenously activated by calmodulin, the calmodulin-dependent kinase II and LCK tyrosine kinase. Inhibited by cGMP, most likely through a cGMP-binding protein that interacts with OCT1. Electrogenic voltage-dependent transporter that mediates the transport of a variety of organic cations such as endogenous bioactive amines, cationic drugs and xenobiotics. Functions as a pH- and Na(+)-independent, bidirectional transporter. Cation cellular uptake or release is driven by the electrochemical potential (i.e. membrane potential and concentration gradient) and substrate selectivity. Hydrophobicity is a major requirement for recognition in polyvalent substrates and inhibitors. Primarily expressed in the basolateral membrane of hepatocytes and proximal tubules and involved in the uptake and disposition of cationic compounds from the blood by hepatic and renal clearance. Most likely functions as an uptake carrier in enterocytes contributing to the intestinal elimination of organic cations from the systemic circulation. Transports endogenous monoamines such as N-1-methylnicotinamide (NMN), guanidine, neurotransmitters dopamine, serotonin, noradrenaline, adrenaline and histamine, and quaternary ammonium compound such as choline. Also transports natural polyamines such as spermidine, agmatine and putrescine at low affinity, but relatively high turnover. Involved in the hepatic and intestinal uptake of the vitamin B1/thiamine, hence regulating hepatic lipid and energy metabolism. Contributes to the influx and efflux of fatty acid carriers carnitines and acylcarnitines across the basolateral membrane of hepatocytes, from the liver to the systemic circulation and inversely and may be involved in regulating the systemic availability of hepatic acylcarnitines. Also capable of transporting non-amine endogenous compounds such as prostaglandin E2 (PGE2) and prostaglandin F2-alpha (PGF2-alpha). May contribute to the transport of cationic compounds in testes across the blood-testis-barrier. Also mediates the uptake of xenobiotics tributylmethylammonium (TBuMA), quinidine, N-methyl-quinine (NMQ), N-methyl-quinidine (NMQD) N-(4,4-azo-n-pentyl)-quinuclidine (APQ), azidoprocainamide methoiodide (AMP), N-(4,4-azo-n-pentyl)-21-deoxyajmalinium (APDA) and 4-(4-(dimethylamino)styryl)-N-methylpyridinium (ASP). The sequence is that of Solute carrier family 22 member 1 (SLC22A1) from Sus scrofa (Pig).